Reading from the N-terminus, the 210-residue chain is CLAVATA3/ESR (CLE)-related protein 4A-3 (210 aa).

A signal peptide spans 1 to 21 (MAKNAMLCLLILRVVLALAFA). Residues 21–83 (ATNKKGDEEP…SNQLPNNNWM (63 aa)) form a required for secretion from the host cytoplasm to the host apoplasm region. Residue N32 is glycosylated (N-linked (GlcNAc...) asparagine). The disordered stretch occupies residues 116 to 210 (RKTGMHSQRH…APAGPDPIHH (95 aa)). Basic and acidic residues-rich tracts occupy residues 125–137 (HHEETTLEQEKRV) and 144–200 (PIHH…EKRG). The A-1 repeat unit spans residues 127 to 135 (EETTLEQEK). The tract at residues 127-198 (EETTLEQEKR…HEDTTLEQEK (72 aa)) is 4 X approximate repeat A. The stretch at 136-147 (RVAGAGPDPIHH) is one CLE-1 repeat. The interval 136 to 210 (RVAGAGPDPI…APAGPDPIHH (75 aa)) is 4 X approximate repeat CLE. The A-2 repeat unit spans residues 148–156 (QDTTLEQEK). One copy of the CLE-2 repeat lies at 157 to 168 (RAVPAGPDPKHH). Residues 169–177 (EETTLEQEK) form an A-3 repeat. The CLE-3 repeat unit spans residues 178 to 189 (RAVPAGPDPKHH). The stretch at 190–198 (EDTTLEQEK) is one A-4 repeat. One copy of the CLE-4 repeat lies at 199 to 210 (RGAPAGPDPIHH).

It belongs to the CLV3/ESR signal peptide family. Highly expressed exclusively within the dorsal esophageal gland cell during syncytium formation in host plants.

The protein localises to the secreted. It localises to the host cytoplasm. It is found in the host extracellular space. The protein resides in the extracellular space. Its subcellular location is the apoplast. Its function is as follows. Mimics host plant CLE extracellular signal peptides that regulate cell fate. May play a role in the differentiation or division of feeding cells (syncytia) induced in plant roots during infection. This chain is CLAVATA3/ESR (CLE)-related protein 4A-3 (CLE-4A-3), found in Globodera rostochiensis (Golden nematode worm).